An 892-amino-acid polypeptide reads, in one-letter code: Alanine--tRNA ligase (892 aa).

Positions 565, 569, 678, and 682 each coordinate Zn(2+). The segment at 857–876 (GGKGGGGRPDMAQAGGPDGA) is disordered.

It belongs to the class-II aminoacyl-tRNA synthetase family. Zn(2+) is required as a cofactor.

The protein localises to the cytoplasm. It carries out the reaction tRNA(Ala) + L-alanine + ATP = L-alanyl-tRNA(Ala) + AMP + diphosphate. In terms of biological role, catalyzes the attachment of alanine to tRNA(Ala) in a two-step reaction: alanine is first activated by ATP to form Ala-AMP and then transferred to the acceptor end of tRNA(Ala). Also edits incorrectly charged Ser-tRNA(Ala) and Gly-tRNA(Ala) via its editing domain. This chain is Alanine--tRNA ligase, found in Bradyrhizobium diazoefficiens (strain JCM 10833 / BCRC 13528 / IAM 13628 / NBRC 14792 / USDA 110).